The primary structure comprises 167 residues: Urease accessory protein UreE (167 aa).

The protein belongs to the UreE family.

Its subcellular location is the cytoplasm. Functionally, involved in urease metallocenter assembly. Binds nickel. Probably functions as a nickel donor during metallocenter assembly. This Pseudomonas aeruginosa (strain LESB58) protein is Urease accessory protein UreE.